The following is a 399-amino-acid chain: Interferon regulatory factor 9 (399 aa).

Positions 9–116 (TRKLRSWIVE…EPYKVYRILP (108 aa)) form a DNA-binding region, IRF tryptophan pentad repeat. Residues 118–189 (GTLPNQPRNQ…CNSELEEGAG (72 aa)) form a disordered region. Polar residues predominate over residues 120 to 129 (LPNQPRNQKS). At Ser139 the chain carries Phosphoserine. A compositionally biased stretch (polar residues) spans 148-157 (NGRTNGVVNH). Low complexity predominate over residues 171–189 (SNRSDSNSNCNSELEEGAG). Ser393 bears the Phosphoserine mark.

The protein belongs to the IRF family. In terms of assembly, interacts with STAT2 in the cytoplasm. Forms the interferon-stimulated gene factor 3 complex (ISGF3) with the heterodimer STAT1:STAT2; upon stimulation.

It localises to the nucleus. In terms of biological role, transcription factor that plays an essential role in anti-viral immunity. It mediates signaling by type I IFNs (IFN-alpha and IFN-beta). Following type I IFN binding to cell surface receptors, Jak kinases (TYK2 and JAK1) are activated, leading to tyrosine phosphorylation of STAT1 and STAT2. IRF9/ISGF3G associates with the phosphorylated STAT1:STAT2 dimer to form a complex termed ISGF3 transcription factor, that enters the nucleus. ISGF3 binds to the IFN stimulated response element (ISRE) to activate the transcription of interferon stimulated genes, which drive the cell in an antiviral state. This Mus musculus (Mouse) protein is Interferon regulatory factor 9 (Irf9).